A 274-amino-acid polypeptide reads, in one-letter code: Speedy protein C (274 aa).

A speedy/Ringo box; Required for CDK-binding region spans residues 37 to 169 (HQEVQAFLSL…FHWAWTRDRR (133 aa)).

Belongs to the Speedy/Ringo family. Interacts with CDK1 and CDK2. Interacts with AURKB. As to expression, expressed in a variety of tissues including bone marrow, kidney, small intestine, liver, placenta and testis.

The protein localises to the cytoplasm. In terms of biological role, promotes progression through the cell cycle via binding and activation of CDK1 and CDK2. Involved in the spindle-assembly checkpoint. Required for recruitment of MAD2L1, BUBR1 and BUB1 to kinetochores. Required for the correct localization of the active form of Aurora B in prometaphase. This chain is Speedy protein C, found in Homo sapiens (Human).